A 197-amino-acid chain; its full sequence is MSEFQKVVVIDAKGHLLGRLASVVAKQLLGGQKVVVVRCEELNISGHFFRNKLKYLAYLRKACRYNPSRGAFHFRAPSRIFQKAVRGMLPHKTARGQAALEHLQAVEGIPPPFDKQKRVVVPAALRVLRLKPGRKYCTVGRLSSEVGWKYSDIVSKLEERRKVKSAAFYQAKLAKQKKIASAKAASSVNGKLAEFGY.

S151 is modified (phosphoserine).

Belongs to the universal ribosomal protein uL13 family. Component of the large ribosomal subunit (LSU). Mature yeast ribosomes consist of a small (40S) and a large (60S) subunit. The 40S small subunit contains 1 molecule of ribosomal RNA (18S rRNA) and at least 33 different proteins. The large 60S subunit contains 3 rRNA molecules (25S, 5.8S and 5S rRNA) and at least 46 different proteins.

It localises to the cytoplasm. Its subcellular location is the nucleus. It is found in the nucleolus. Its function is as follows. Component of the ribosome, a large ribonucleoprotein complex responsible for the synthesis of proteins in the cell. The small ribosomal subunit (SSU) binds messenger RNAs (mRNAs) and translates the encoded message by selecting cognate aminoacyl-transfer RNA (tRNA) molecules. The large subunit (LSU) contains the ribosomal catalytic site termed the peptidyl transferase center (PTC), which catalyzes the formation of peptide bonds, thereby polymerizing the amino acids delivered by tRNAs into a polypeptide chain. The nascent polypeptides leave the ribosome through a tunnel in the LSU and interact with protein factors that function in enzymatic processing, targeting, and the membrane insertion of nascent chains at the exit of the ribosomal tunnel. The sequence is that of Large ribosomal subunit protein uL13A (rpl1602) from Schizosaccharomyces pombe (strain 972 / ATCC 24843) (Fission yeast).